A 771-amino-acid chain; its full sequence is Hyperosmolality-gated Ca2+ permeable channel 1.2 (771 aa).

Topologically, residues 1 to 4 (MATL) are extracellular. A helical membrane pass occupies residues 5–27 (QDIGVSAGINILSAFVFFIIFAV). The Cytoplasmic segment spans residues 28–100 (LRLQPFNDRV…AGLDSVVYLR (73 aa)). A helical transmembrane segment spans residues 101 to 125 (IYWLGLKIFTPIAVLAWAVLVPVNW). Over 126-156 (TNNTLEMAKQLRNVTSSDIDKLSVSNIPEYS) the chain is Extracellular. Residues 157–178 (MRFWTHIVMAYAFTIWTCYVLM) traverse the membrane as a helical segment. At 179–374 (KEYETIANMR…AIPYVSLTVR (196 aa)) the chain is on the cytoplasmic side. Residues 375–401 (RLIMHVAFFFLTFFFIVPIAFVQSLAT) form a helical membrane-spanning segment. The Extracellular portion of the chain corresponds to 402 to 419 (IEGIVKAAPFLKFIVDDK). Residues 420–445 (FMKSVIQGFLPGIALKLFLAFLPSIL) form a helical membrane-spanning segment. The Cytoplasmic portion of the chain corresponds to 446-462 (MIMSKFEGFTSISSLER). Residues 463 to 485 (RAAFRYYIFNLVNVFLASVIAGA) form a helical membrane-spanning segment. The Extracellular portion of the chain corresponds to 486–504 (AFEQLNSFLNQSANQIPKT). Residues 505–533 (IGVAIPMKATFFITYIMVDGWAGVAGEIL) traverse the membrane as a helical segment. At 534 to 566 (MLKPLIMFHLKNAFLVKTDKDREEAMDPGSIGF) the chain is on the cytoplasmic side. The helical transmembrane segment at 567 to 588 (NTGEPRIQLYFLLGLVYAPVTP) threads the bilayer. Methionine 589 is a topological domain (extracellular). A helical membrane pass occupies residues 590-605 (LLPFILVFFALAYIVY). Residues 606-625 (RHQIINVYNQEYESAAAFWP) lie on the Cytoplasmic side of the membrane. A helical membrane pass occupies residues 626 to 648 (DVHGRVIAALVISQLLLMGLLGT). Residues 649-651 (KHA) lie on the Extracellular side of the membrane. The chain crosses the membrane as a helical span at residues 652–670 (ALAAPFLIALPVLTIGFHH). Residues 671-771 (FCKGRYEPAF…PSLPFSGKLV (101 aa)) lie on the Cytoplasmic side of the membrane. Residues 741-771 (PTKRQSRRNTPAPSIISGDDSPSLPFSGKLV) are disordered.

It belongs to the CSC1 (TC 1.A.17) family. As to quaternary structure, homodimer.

It is found in the membrane. Activated by hyperosmotic shock after mannitol or NaCl treatment. Activated by mechanical pressure: activated in response to membrane stretch and poke. Membrane lipids play a key role in mechanosensation by acting as a wall mainly formed by lipid head groups. In terms of biological role, acts as an osmosensitive calcium-permeable cation channel. Specifically conducts cations including Ca(2+), K(+) and Na(+) in vitro. Inactivation or closure of the channel is calcium-dependent. Mechanosensitive ion channel that converts mechanical stimuli into a flow of ions: activated in response to membrane stretch and poke. This chain is Hyperosmolality-gated Ca2+ permeable channel 1.2, found in Arabidopsis thaliana (Mouse-ear cress).